A 496-amino-acid chain; its full sequence is UDP-glycosyltransferase 84A2 (496 aa).

The Proton acceptor role is filled by His23. His23 contacts an anthocyanidin. Residues Gln352, His367, Trp370, Asn371, Ser372, and Glu375 each contribute to the UDP-alpha-D-glucose site. An an anthocyanidin-binding site is contributed by Gly390. Residues Asp391 and Gln392 each contribute to the UDP-alpha-D-glucose site.

This sequence belongs to the UDP-glycosyltransferase family. Expressed in roots, cotyledons, leaf veins and trichomes.

The enzyme catalyses (E)-sinapate + UDP-alpha-D-glucose = 1-O-(trans-sinapoyl)-beta-D-glucose + UDP. Its function is as follows. Sinapate glucosyltransferase (SGT) required for the biosynthesis of the glucose ester sinapoylglucose and subsequently sinapoylmalate and sinapoylcholine. Is the major SGT activity in plant. Plays an important role in sinapoylation of anthocyanins. Sinapoylglucose produced by UGT84A2 is a significant source of sinapoyl moieties for anthocyanins. Indole-3-butyric acid (IBA)-specific glucosyltransferase that catalyzes the glucosylation of the auxin IBA, but not indole-3-acetic acid (IAA). May be involved in flowering regulation through IBA-mediated transcriptional repression of the auxin-response factors ARF6 and ARF8 and downstream flowering pathway genes. Can glucosylate the phytotoxic xenobiotic compound 2,4,5-trichlorophenol (TCP). This chain is UDP-glycosyltransferase 84A2, found in Arabidopsis thaliana (Mouse-ear cress).